Reading from the N-terminus, the 222-residue chain is Inositol diphosphatase DSP1 (222 aa).

The segment covering 1-14 has biased composition (polar residues); sequence MRQEATCSLVLTQD. The interval 1–41 is disordered; the sequence is MRQEATCSLVLTQDAQHRKNQPPLAEEDDDRDHTDDAMPPP. A Tyrosine-protein phosphatase domain is found at 68 to 222; it reads NFAMVDHGVY…LKHLPASFSC (155 aa). The tract at residues 124 to 136 is WPD loop important for active site topology; that stretch reads FGIDGSKEPFVNI. 3 residues coordinate 1D-myo-inositol hexakisphosphate: N135, I136, and R140. Catalysis depends on C160, which acts as the Phosphocysteine intermediate.

Belongs to the protein-tyrosine phosphatase family. Atypical dual-specificity phosphatase Siw14-like subfamily.

It localises to the nucleus. It is found in the cytoplasm. The enzyme catalyses 5-diphospho-1D-myo-inositol 1,2,3,4,6-pentakisphosphate + H2O = 1D-myo-inositol hexakisphosphate + phosphate + H(+). It catalyses the reaction 1,5-bis(diphospho)-1D-myo-inositol 2,3,4,6-tetrakisphosphate + H2O = 1-diphospho-1D-myo-inositol 2,3,4,5,6-pentakisphosphate + phosphate + 2 H(+). It carries out the reaction 3,5-bis(diphospho)-1D-myo-inositol 1,2,4,6-tetrakisphosphate + H2O = 3-diphospho-1D-myo-inositol 1,2,4,5,6-pentakisphosphate + phosphate + 2 H(+). The catalysed reaction is 6-diphospho-1D-myo-inositol pentakisphosphate + H2O = 1D-myo-inositol hexakisphosphate + phosphate + H(+). Functionally, cleaves the beta-phosphate at the 5-position of soluble inositol pyrophosphates. Has highest activity on 5-diphosphoinositol 1,2,3,4,6-pentakisphosphate (5-InsP(7)). Possesses phosphotyrosine phosphatase activity in vitro. May contribute to regulation of drought stress responses. This is Inositol diphosphatase DSP1 from Oryza sativa subsp. japonica (Rice).